Consider the following 657-residue polypeptide: Glycogen debranching enzyme (657 aa).

The active-site Nucleophile is Asp336. The Proton donor role is filled by Glu371. A disordered region spans residues 460 to 479 (ANGEENRDGTNNNYSNNHGK).

The protein belongs to the glycosyl hydrolase 13 family.

It carries out the reaction Hydrolysis of (1-&gt;6)-alpha-D-glucosidic linkages to branches with degrees of polymerization of three or four glucose residues in limit dextrin.. It functions in the pathway glycan degradation; glycogen degradation. In terms of biological role, removes maltotriose and maltotetraose chains that are attached by 1,6-alpha-linkage to the limit dextrin main chain, generating a debranched limit dextrin. The polypeptide is Glycogen debranching enzyme (Escherichia coli (strain SMS-3-5 / SECEC)).